The primary structure comprises 215 residues: FMN-dependent NADH:quinone oxidoreductase (215 aa).

17-19 contributes to the FMN binding site; the sequence is SAS.

It belongs to the azoreductase type 1 family. In terms of assembly, homodimer. Requires FMN as cofactor.

It catalyses the reaction 2 a quinone + NADH + H(+) = 2 a 1,4-benzosemiquinone + NAD(+). It carries out the reaction N,N-dimethyl-1,4-phenylenediamine + anthranilate + 2 NAD(+) = 2-(4-dimethylaminophenyl)diazenylbenzoate + 2 NADH + 2 H(+). Functionally, quinone reductase that provides resistance to thiol-specific stress caused by electrophilic quinones. Also exhibits azoreductase activity. Catalyzes the reductive cleavage of the azo bond in aromatic azo compounds to the corresponding amines. The sequence is that of FMN-dependent NADH:quinone oxidoreductase from Clostridium botulinum (strain Eklund 17B / Type B).